A 175-amino-acid chain; its full sequence is General odorant-binding protein 84a (175 aa).

Residues 1–24 form the signal peptide; sequence MYSALVRACAVIAFLILSPNCARA. 2 disulfides stabilise this stretch: Cys103–Cys151 and Cys140–Cys160.

In terms of tissue distribution, present only in a small number of hairs scattered over the surface of the funiculus.

Its subcellular location is the secreted. This is General odorant-binding protein 84a (Obp84a) from Drosophila melanogaster (Fruit fly).